Consider the following 1031-residue polypeptide: MFYSQFILAKKGPLGTIWIAAHLERKLRKNQVADTDIGVSVDSILFPEAPIALRLSSHLLLGVVRIYSRKVNYLFDDCSEALLKVKQAFRSAAVDLPPEESTAPYHSITLPETFDLDDFELPDNEIFQGNYVDHHVSTKEQITLQDTMDGVVYSTSQFGLDERFGDGDTSQAALDLDEAVFQDKDVIGSDDEGVPGIDHNAYLDAAAPGIKDSMEGVSEAMPMDFNEEQVEDLAMNNEFIEDAQAPQTPGLVEVPNSSSVREQMACDDHMDVEDLNAEEGIKSSGELNANEMPKRGEDLSSEYNAPESAVTPVEVDKSQIDENVNTQNEPEEERAEHVHVTSPCCSHITTEMEDPGQVMNEAGANVVPDKPDAVPPLETPGEENRDHFAIATEVNQETDSSLQGDEQAYSRPDGQLNNAHETDEQLGNLTGFTDSDFPPPEKVLAVPNRQGDGNDFMVESTPDKEDPGTCNDDAGNNNITGKKRTFTESTLTAESLNSVESVGLIQSKRTADSVPDDDDLLSSILVGKSSFLKMRPTPVLEPATTKRLRSAPRSTATKRKVLMDDPMVLHGDIIRQQLTNTEDIRRVRKKAPCTVPEIVMLQRQALEDGLFKEPIFTGMSVELVSLHTEPYDLRGIMIIENDDRHASVGAVEDNECSVTAVEENKTEESSDPQAHPNDCEEQPGTAHTHPQEEQTINQQEELKDDNELAEKSDLEVLKEGNGAADEVNLVVIDDVSQIPSEEKLDRVEDLQVEESHENHDGEGGQDVCADPNEKSCTDVIEIAEGDTDINPIFNEMDLKVEDELPHEDEKTDASAEVSELGRDDQTPCDNTVGSTETGCLEAGDLSNMALENCNEPLVEANSDGLNPETESYNKYEPHNEMSNEEASMQNALDGEHTSRDGLMGDNDEMDTMENAHDTGFLNVDDDEVDEDHEEDDIQYDDETRLLENSGWSSRTRAVAKYLQTLFDKETENGKNVLVADKLLAGKTRKEASRMFFETLVLKTRDYIQVEQGKPYESIIIKPRPKLTKSIF.

Positions 461–481 (TPDKEDPGTCNDDAGNNNITG) are disordered. Residues 545–552 (TKRLRSAP) carry the Nuclear localization signal motif. Disordered stretches follow at residues 661–703 (VEEN…EELK), 742–772 (EKLD…ADPN), and 803–835 (ELPH…VGST). 2 stretches are compositionally biased toward basic and acidic residues: residues 742 to 762 (EKLD…HDGE) and 803 to 825 (ELPH…RDDQ).

This sequence belongs to the rad21 family. Component of the cohesin complex. In terms of tissue distribution, expressed in tissues containing dividing cells such as seedlings, flower buds, flowers and inflorescence meristem tissue.

Its subcellular location is the nucleus. It localises to the chromosome. It is found in the centromere. Functionally, involved in sister chromatid and centromere cohesion during mitosis. The chain is Sister chromatid cohesion 1 protein 4 (SYN4) from Arabidopsis thaliana (Mouse-ear cress).